The following is a 449-amino-acid chain: MNKMLYIKTYGCQMNVYDSNRMVDLLETQGYNIVANMADASVIILNTCHIREKASEKMYSELGRIKKLQQSRLKAGKSKAKIIVAGCVGQAEGEEIFIREPAVNIIVGPQSYYNLPTMLEKLDSGTENHLIDLDFVEAAKFNKLPEVLKSPTVSGLVSVQEGCDKFCTFCVVPYTRGAEFSRPLEQVYREVLNIAQQGAKEVVLVGQNVSAYHGKDENGKECSLADLIKYVAKIDKIKRIRYITSHPNDMTDQLLSLHATEEKLMPFLHLPVQSGSNKILKLMNRRHTRERYLEIIQQLRELRPDIVISSDIIVGFPGEDDEDFEATLSLAKEAKFGQCYSFKYSQRPGTPAAVKQQISEEVKQHRLSILQAQLMLQQLECNQKLIGKVVPVLFDRDGKYDGQIIGKTPYMQSVCIMNEKDNNLYGKIVNVKILSASASSLFGEVCPNS.

The MTTase N-terminal domain occupies 3–124 (KMLYIKTYGC…LPTMLEKLDS (122 aa)). [4Fe-4S] cluster contacts are provided by Cys12, Cys48, Cys87, Cys163, Cys167, and Cys170. The 232-residue stretch at 149 to 380 (KSPTVSGLVS…QAQLMLQQLE (232 aa)) folds into the Radical SAM core domain. The 65-residue stretch at 383-447 (QKLIGKVVPV…ASSLFGEVCP (65 aa)) folds into the TRAM domain.

This sequence belongs to the methylthiotransferase family. MiaB subfamily. Monomer. It depends on [4Fe-4S] cluster as a cofactor.

The protein localises to the cytoplasm. It catalyses the reaction N(6)-dimethylallyladenosine(37) in tRNA + (sulfur carrier)-SH + AH2 + 2 S-adenosyl-L-methionine = 2-methylsulfanyl-N(6)-dimethylallyladenosine(37) in tRNA + (sulfur carrier)-H + 5'-deoxyadenosine + L-methionine + A + S-adenosyl-L-homocysteine + 2 H(+). Its function is as follows. Catalyzes the methylthiolation of N6-(dimethylallyl)adenosine (i(6)A), leading to the formation of 2-methylthio-N6-(dimethylallyl)adenosine (ms(2)i(6)A) at position 37 in tRNAs that read codons beginning with uridine. The sequence is that of tRNA-2-methylthio-N(6)-dimethylallyladenosine synthase from Orientia tsutsugamushi (strain Boryong) (Rickettsia tsutsugamushi).